The primary structure comprises 1399 residues: DNA-directed RNA polymerase subunit beta' (1399 aa).

4 residues coordinate Zn(2+): C70, C72, C85, and C88. Mg(2+) contacts are provided by D460, D462, and D464. Residues C814, C888, C895, and C898 each coordinate Zn(2+).

It belongs to the RNA polymerase beta' chain family. As to quaternary structure, the RNAP catalytic core consists of 2 alpha, 1 beta, 1 beta' and 1 omega subunit. When a sigma factor is associated with the core the holoenzyme is formed, which can initiate transcription. It depends on Mg(2+) as a cofactor. Zn(2+) serves as cofactor.

It carries out the reaction RNA(n) + a ribonucleoside 5'-triphosphate = RNA(n+1) + diphosphate. Functionally, DNA-dependent RNA polymerase catalyzes the transcription of DNA into RNA using the four ribonucleoside triphosphates as substrates. This chain is DNA-directed RNA polymerase subunit beta', found in Pseudomonas putida (strain W619).